The chain runs to 175 residues: Crossover junction endodeoxyribonuclease RuvC (175 aa).

Residues D8, E67, and D139 contribute to the active site. The Mg(2+) site is built by D8, E67, and D139.

Belongs to the RuvC family. As to quaternary structure, homodimer which binds Holliday junction (HJ) DNA. The HJ becomes 2-fold symmetrical on binding to RuvC with unstacked arms; it has a different conformation from HJ DNA in complex with RuvA. In the full resolvosome a probable DNA-RuvA(4)-RuvB(12)-RuvC(2) complex forms which resolves the HJ. Requires Mg(2+) as cofactor.

The protein resides in the cytoplasm. It catalyses the reaction Endonucleolytic cleavage at a junction such as a reciprocal single-stranded crossover between two homologous DNA duplexes (Holliday junction).. The RuvA-RuvB-RuvC complex processes Holliday junction (HJ) DNA during genetic recombination and DNA repair. Endonuclease that resolves HJ intermediates. Cleaves cruciform DNA by making single-stranded nicks across the HJ at symmetrical positions within the homologous arms, yielding a 5'-phosphate and a 3'-hydroxyl group; requires a central core of homology in the junction. The consensus cleavage sequence is 5'-(A/T)TT(C/G)-3'. Cleavage occurs on the 3'-side of the TT dinucleotide at the point of strand exchange. HJ branch migration catalyzed by RuvA-RuvB allows RuvC to scan DNA until it finds its consensus sequence, where it cleaves and resolves the cruciform DNA. The sequence is that of Crossover junction endodeoxyribonuclease RuvC from Marinobacter nauticus (strain ATCC 700491 / DSM 11845 / VT8) (Marinobacter aquaeolei).